The primary structure comprises 123 residues: Small ribosomal subunit protein uS13 (123 aa).

The tract at residues 94–123 is disordered; the sequence is AGLPVRGQRTKTNARTRKGPKKTVGVQRKK. Positions 101 to 123 are enriched in basic residues; that stretch reads QRTKTNARTRKGPKKTVGVQRKK.

This sequence belongs to the universal ribosomal protein uS13 family. Part of the 30S ribosomal subunit. Forms a loose heterodimer with protein S19. Forms two bridges to the 50S subunit in the 70S ribosome.

In terms of biological role, located at the top of the head of the 30S subunit, it contacts several helices of the 16S rRNA. In the 70S ribosome it contacts the 23S rRNA (bridge B1a) and protein L5 of the 50S subunit (bridge B1b), connecting the 2 subunits; these bridges are implicated in subunit movement. Contacts the tRNAs in the A and P-sites. The chain is Small ribosomal subunit protein uS13 from Acetivibrio thermocellus (strain ATCC 27405 / DSM 1237 / JCM 9322 / NBRC 103400 / NCIMB 10682 / NRRL B-4536 / VPI 7372) (Clostridium thermocellum).